The sequence spans 447 residues: BAG family molecular chaperone regulator 5 (447 aa).

5 consecutive BAG domains span residues 9-86 (SISR…EQNA), 95-167 (QNIF…ENCM), 182-260 (SVAK…DLEE), 275-350 (SILK…DLKE), and 365-442 (SHKA…DLKS).

As to quaternary structure, binds to the ATPase domain of HSP/HSP70 chaperones. Binds PRKN. Interacts complex with HSPA8 and JPH2.

Its function is as follows. Co-chaperone for HSP/HSP70 proteins. It functions as a nucleotide-exchange factor promoting the release of ADP from HSP70, thereby activating Hsp70-mediated protein refolding. Has an essential role in maintaining proteostasis at junctional membrane complexes (JMC), where it may function as a scaffold between the HSPA8 chaperone and JMC proteins enabling correct, HSPA8-dependent JMC protein folding. Inhibits both auto-ubiquitination of PRKN and ubiquitination of target proteins by PRKN. The protein is BAG family molecular chaperone regulator 5 (BAG5) of Bos taurus (Bovine).